The following is a 144-amino-acid chain: Tryparedoxin (144 aa).

One can recognise a Thioredoxin domain in the interval 2–144 (SGLAKYLPGA…PDGANFPWPN (143 aa)). Cysteine 40 and cysteine 43 are oxidised to a cystine.

Belongs to the thioredoxin family.

Its function is as follows. Acts as a thiol-disulfide oxidoreductase. It is spontaneously reduced by trypanothione. This Trypanosoma brucei brucei protein is Tryparedoxin.